The following is a 159-amino-acid chain: Large ribosomal subunit protein uL11 (159 aa).

Belongs to the universal ribosomal protein uL11 family. In terms of assembly, part of the ribosomal stalk of the 50S ribosomal subunit. Interacts with L10 and the large rRNA to form the base of the stalk. L10 forms an elongated spine to which L12 dimers bind in a sequential fashion forming a multimeric L10(L12)X complex.

In terms of biological role, forms part of the ribosomal stalk which helps the ribosome interact with GTP-bound translation factors. The protein is Large ribosomal subunit protein uL11 of Methanococcus maripaludis (strain C6 / ATCC BAA-1332).